Consider the following 196-residue polypeptide: DnaA initiator-associating protein DiaA (196 aa).

Residues 34-196 (VVQSLLNGNK…DNTLFPHQEV (163 aa)) form the SIS domain.

It belongs to the SIS family. DiaA subfamily. In terms of assembly, homotetramer; dimer of dimers.

In terms of biological role, required for the timely initiation of chromosomal replication via direct interactions with the DnaA initiator protein. The sequence is that of DnaA initiator-associating protein DiaA from Erwinia tasmaniensis (strain DSM 17950 / CFBP 7177 / CIP 109463 / NCPPB 4357 / Et1/99).